A 1234-amino-acid chain; its full sequence is Formin-like protein 3 (1234 aa).

Residues 1–208 (MRLDSFPASI…QYVARRNISP (208 aa)) form the Phosphatase tensin-type domain. The Phosphocysteine intermediate role is filled by cysteine 141. Residues 214-352 (ERALSFDCLI…FRAEMLFCEL (139 aa)) enclose the C2 tensin-type domain. Disordered stretches follow at residues 443–478 (DSDEEKYSVASDSVSSSEHEKVQPGGNSSDSENINH) and 492–840 (LVNT…LKPL). Residues 498-507 (VLPPTTPPPC) are compositionally biased toward pro residues. A compositionally biased stretch (basic and acidic residues) spans 524-534 (VQHESPSDRKL). 7 stretches are compositionally biased toward pro residues: residues 536–576 (SPSP…PPLP), 584–656 (QPPP…PPAP), 663–673 (PAPPPPPPPPR), 688–699 (GPPPPPPPPLPP), 709–721 (PSAPPPPPPPPPA), 729–739 (APAPPLPPPLP), and 762–784 (PAPPPPPPQAPKPPGTVPPPPPL). Residues 827–1226 (QQSNPPKKAS…KLEKDKEKAT (400 aa)) form the FH2 domain.

Belongs to the formin-like family. Class-II subfamily.

The protein is Formin-like protein 3 (FH3) of Oryza sativa subsp. japonica (Rice).